The following is a 397-amino-acid chain: Tauropine dehydrogenase (397 aa).

The protein belongs to the lysopine/nopaline/octopine/opine/vitopine dehydrogenases family.

It carries out the reaction tauropine + NAD(+) + H2O = taurine + pyruvate + NADH + H(+). With respect to regulation, subject to substrate inhibition by pyruvate for the reverse reaction but not for the forward reaction of the tauropine dehydrogenase activity. Its function is as follows. May play a role in maintaining a redox balance during environmental and functional hypoxia. Exhibits high specificity for taurine and in addition, requires both alpha amino group and C-2 carbon chain length as a critical factor for active site binding of the amino acid. A methyl group in the beta position may be critical for active site binding of the keto acid. In the reverse reaction requires NAD(H) for the activity but not NADP(H). The sequence is that of Tauropine dehydrogenase from Arabella iricolor (Opal worm).